The chain runs to 921 residues: Collagen alpha-1(IX) chain (921 aa).

Positions 1–23 (MKNFWKISVFFCVCSCLGPWVSA) are cleaved as a signal peptide. The tract at residues 24-268 (TLKRRARFPA…ITTSQTTDER (245 aa)) is nonhelical region (NC4). Cystine bridges form between C44–C242 and C198–C252. In terms of domain architecture, Laminin G-like spans 50–244 (GQDDLPGFDL…LQWMLIHCDP (195 aa)). Residues D213, D215, and H253 each coordinate Zn(2+). Disordered stretches follow at residues 253 to 759 (HELP…APTD) and 783 to 921 (RPDT…GPDK). 8 Collagen-like domains span residues 269-325 (GPPG…PGAD), 326-356 (GLTGPDGSPGSVGPRGQKGEPGVPGSRGFPG), 358-403 (GIPG…GTIG), 416-472 (PPGR…GLRG), 473-512 (ITGIVGDKGEKGARGFDGEPGPQGIPGAAGDQGQRGPPGE), 604-656 (GKPG…LPGP), 657-711 (PGLP…PGEP), and 712-755 (GLRG…PPGR). The tract at residues 269 to 405 (GPPGEQGPPG…PGPSGTIGFH (137 aa)) is triple-helical region (COL3). Pro residues-rich tracts occupy residues 273-285 (EQGPPGPPGPPGV) and 298-310 (KGPPGPPGPPGDP). Low complexity predominate over residues 368 to 383 (TTGLPGELGRVGPIGD). The segment covering 387–398 (RGPPGPPGPPGP) has biased composition (pro residues). The segment at 406-417 (DGDPLCPNSCPP) is nonhelical region (NC3). A triple-helical region (COL2) region spans residues 418 to 756 (GRSGYPGLPG…PGIQGPPGRA (339 aa)). Positions 479-489 (DKGEKGARGFD) are enriched in basic and acidic residues. Low complexity-rich tracts occupy residues 594–632 (PGKPGQLGSSGKPGQQGPPGEVGPRGPRGLPGSRGPVGP) and 639–650 (PGKLGSVGSPGL). A nonhelical region (NC2) region spans residues 757–786 (PTDQHIKQVCMRVVQEHFVEMAASLKRPDT). Residues 787-901 (GASGLPGRPG…PGPPGPPGFC (115 aa)) are triple-helical region (COL1). Residues 790 to 847 (GLPGRPGPPGPPGPPGENGFPGQMGIRGLPGIKGPPGALGLRGPKGDLGEKGERGPPG) form the Collagen-like 9 domain. Pro residues predominate over residues 794-804 (RPGPPGPPGPP). Over residues 833–845 (PKGDLGEKGERGP) the composition is skewed to basic and acidic residues. The span at 888–900 (VPGPPGPPGPPGF) shows a compositional bias: pro residues. Residues 902 to 921 (EPASCTLQSGQRAFSKGPDK) are nonhelical region (NC1).

It belongs to the fibril-associated collagens with interrupted helices (FACIT) family. In terms of assembly, heterotrimer of an alpha 1(IX), an alpha 2(IX) and an alpha 3(IX) chain. Post-translationally, covalently linked to the telopeptides of type II collagen by lysine-derived cross-links. Prolines at the third position of the tripeptide repeating unit (G-X-Y) are hydroxylated in some or all of the chains.

Its subcellular location is the secreted. The protein resides in the extracellular space. It is found in the extracellular matrix. In terms of biological role, structural component of hyaline cartilage and vitreous of the eye. The polypeptide is Collagen alpha-1(IX) chain (Col9a1) (Mus musculus (Mouse)).